Consider the following 134-residue polypeptide: Complexin-1 (134 aa).

The tract at residues 1–112 (MEFVMKQALG…PGCGDAAEEE (112 aa)) is disordered. Residues 15-81 (DMGKMLGGDE…IKKKEEREAE (67 aa)) are compositionally biased toward basic and acidic residues. Positions 29–69 (DAAKKEEERQEALRQEEEERKAKYAKMEAEREAVRQGIRDK) form a coiled coil. The interaction with the SNARE complex stretch occupies residues 48-70 (RKAKYAKMEAEREAVRQGIRDKY).

It belongs to the complexin/synaphin family. As to quaternary structure, binds to the SNARE core complex containing SNAP25, VAMP2 and STX1A.

The protein resides in the cytoplasm. Its subcellular location is the cytosol. It is found in the perikaryon. It localises to the presynapse. Functionally, positively regulates a late step in synaptic vesicle exocytosis. Organizes the SNAREs into a cross-linked zigzag topology that, when interposed between the vesicle and plasma membranes, is incompatible with fusion, thereby preventing SNAREs from releasing neurotransmitters until an action potential arrives at the synapse. Also involved in glucose-induced secretion of insulin by pancreatic beta-cells. The protein is Complexin-1 (CPLX1) of Bos taurus (Bovine).